The primary structure comprises 199 residues: MESDQSKVESDQSKMESDQSKVESDQSISQSTSKKRSQYSLRLEAKQRLRFNYGVTERQLLKYVCIAKKARGSTGQVLLQLLEMRLDNIIFRLGLSPTIPGARQLVNHRHILVNDQIVDIPSYRCKPNDIITVRDHQKSQELIKRNIKLAKIDEIPSHLNISYLEETKPKGFINKIVDRGSIGLEINELLVVEYYSRQA.

Over residues 1–24 the composition is skewed to basic and acidic residues; it reads MESDQSKVESDQSKMESDQSKVES. Positions 1–35 are disordered; the sequence is MESDQSKVESDQSKMESDQSKVESDQSISQSTSKK. The S4 RNA-binding domain occupies 84 to 146; sequence MRLDNIIFRL…QKSQELIKRN (63 aa).

The protein belongs to the universal ribosomal protein uS4 family. Part of the 30S ribosomal subunit. Contacts protein S5. The interaction surface between S4 and S5 is involved in control of translational fidelity.

It is found in the plastid. Its subcellular location is the chloroplast. Its function is as follows. One of the primary rRNA binding proteins, it binds directly to 16S rRNA where it nucleates assembly of the body of the 30S subunit. With S5 and S12 plays an important role in translational accuracy. The protein is Small ribosomal subunit protein uS4c (rps4) of Psilotum nudum (Whisk fern).